Reading from the N-terminus, the 520-residue chain is Laccase (520 aa).

Positions 1 to 21 (MHTFLRSTALVVAGLSARALA) are cleaved as a signal peptide. 2 Plastocyanin-like domains span residues 22–148 (SIGP…FVVY) and 160–304 (VDDD…ILRY). Asn75 is a glycosylation site (N-linked (GlcNAc...) asparagine). Cu cation contacts are provided by His85, His87, His130, and His132. 2 disulfide bridges follow: Cys106-Cys509 and Cys138-Cys227. N-linked (GlcNAc...) asparagine glycans are attached at residues Asn352 and Asn402. In terms of domain architecture, Plastocyanin-like 3 spans 373–496 (TVPVLLQILS…VFAEDIPDVA (124 aa)). Residues His418, His421, His423, His473, Cys474, His475, and His479 each coordinate Cu cation.

This sequence belongs to the multicopper oxidase family. Cu cation is required as a cofactor.

The protein localises to the secreted. It catalyses the reaction 4 hydroquinone + O2 = 4 benzosemiquinone + 2 H2O. Lignin degradation and detoxification of lignin-derived products. The sequence is that of Laccase (LAC) from Phlebia radiata (White-rot fungus).